We begin with the raw amino-acid sequence, 257 residues long: NAD-capped RNA hydrolase NudC (257 aa).

Arg-69 provides a ligand contact to substrate. Residues Cys-98 and Cys-101 each contribute to the Zn(2+) site. Glu-111 contributes to the substrate binding site. Zn(2+) contacts are provided by Cys-116 and Cys-119. Tyr-124 contributes to the substrate binding site. Residues 125 to 248 (PQIAPCIIVA…TVARRLIEDT (124 aa)) enclose the Nudix hydrolase domain. 3 residues coordinate a divalent metal cation: Ala-158, Glu-174, and Glu-178. The short motif at 159 to 180 (GFVEVGETLEQAVAREVMEESG) is the Nudix box element. 192–199 (QPWPFPQS) is a binding site for substrate. Glu-219 contributes to the a divalent metal cation binding site. Ala-241 is a substrate binding site.

It belongs to the Nudix hydrolase family. NudC subfamily. Homodimer. The cofactor is Mg(2+). It depends on Mn(2+) as a cofactor. Requires Zn(2+) as cofactor.

The catalysed reaction is a 5'-end NAD(+)-phospho-ribonucleoside in mRNA + H2O = a 5'-end phospho-adenosine-phospho-ribonucleoside in mRNA + beta-nicotinamide D-ribonucleotide + 2 H(+). It carries out the reaction NAD(+) + H2O = beta-nicotinamide D-ribonucleotide + AMP + 2 H(+). It catalyses the reaction NADH + H2O = reduced beta-nicotinamide D-ribonucleotide + AMP + 2 H(+). MRNA decapping enzyme that specifically removes the nicotinamide adenine dinucleotide (NAD) cap from a subset of mRNAs by hydrolyzing the diphosphate linkage to produce nicotinamide mononucleotide (NMN) and 5' monophosphate mRNA. The NAD-cap is present at the 5'-end of some mRNAs and stabilizes RNA against 5'-processing. Has preference for mRNAs with a 5'-end purine. Catalyzes the hydrolysis of a broad range of dinucleotide pyrophosphates. The chain is NAD-capped RNA hydrolase NudC from Salmonella typhimurium (strain LT2 / SGSC1412 / ATCC 700720).